Here is a 402-residue protein sequence, read N- to C-terminus: Fugralins biosynthesis cluster protein 2 (402 aa).

Transmembrane regions (helical) follow at residues 28–48 (NCLAYTVLILCAVITTICFLL), 109–129 (ILIFGVCYSFVLPFLKIAILV), 145–165 (IFWWGCMVIGFVQATSNTAIV), 232–252 (VIFGLGLLACVSAAVRLAVTV), and 264–284 (LAPLVFWATAEMTCGFFIVCV). Disordered stretches follow at residues 312–335 (NPNTADRYAKSGTKGSQLSSTGPK) and 378–402 (TQDNRSTSDSEGHAAFPASQKPWGV). Polar residues predominate over residues 324–334 (TKGSQLSSTGP). N-linked (GlcNAc...) asparagine glycosylation occurs at N381.

The protein belongs to the SAT4 family.

The protein localises to the membrane. Its pathway is secondary metabolite biosynthesis. Its function is as follows. Part of the gene cluster that mediates the biosynthesis of the tetraketides fugralins such as linear fugralin A and cyclic fugralin B, volatile compounds that play a role in the asexual reproductive cycle but are not involved in pathogenicity. One of the key features of fugralins is the presence of a double methyl group, which is only rarely encountered in fungal secondary metabolites. As the fugralins cluster does not contain an independent methyltransferase, the PKS FGR1 is probably responsible for adding two methyl groups to the same carbon atom. Fugralin B is similar to fugralin A except for a cyclization between the carboxylic acid C-8 and the alcohol on C-4 resulting in a six membered lactone ring, probably catalyzed by the cyclase FGR4. The exact role of the individual cluster genes remains unknown and further work is needed to unravel the biosynthetic pathway. The sequence is that of Fugralins biosynthesis cluster protein 2 from Gibberella zeae (strain ATCC MYA-4620 / CBS 123657 / FGSC 9075 / NRRL 31084 / PH-1) (Wheat head blight fungus).